A 908-amino-acid chain; its full sequence is Autophagy-related protein 9 (908 aa).

Residues 1 to 216 (MADGVIARLM…SGMWCIVVER (216 aa)) are Cytoplasmic-facing. Residues 64–162 (SRATVDGRIP…IDQELQPPLH (99 aa)) form a disordered region. The chain crosses the membrane as a helical span at residues 217–237 (VLHLIKVAFVAFLLTFLSQCV). The Lumenal segment spans residues 238–259 (DFKKIPSNQKLSQVLVPQCTRN). Residue Asn-259 is glycosylated (N-linked (GlcNAc...) asparagine). Residues 260–280 (MSGLWNIGLWLFAFYFMWKSI) form a helical membrane-spanning segment. At 281-433 (QYILDLRRLT…GILSAKLRSR (153 aa)) the chain is on the cytoplasmic side. Residues 434 to 454 (FIFAGVMILILSPFVAGYLII) lie within the membrane without spanning it. Over 455 to 525 (VYFLEYYNEI…KTSMVAKTVS (71 aa)) the chain is Cytoplasmic. Residues 526–546 (FIAGSIATVLALISVFDPEMF) traverse the membrane as a helical segment. At 547–555 (LGFEITHDR) the chain is on the lumenal side. The chain crosses the membrane as a helical span at residues 556–576 (TVLFYTAVFGAIWSVARGSVS). The Cytoplasmic portion of the chain corresponds to 577 to 622 (EDNAVFDPEYALGNVVEYTHYQPEHWKDRWHSADVKAEFEELYKLK). An intramembrane segment occupies 623–643 (LVIFIEEILSILTTPFVLFFS). Residues 644 to 908 (LPKSADQIID…HLNRRLGGVR (265 aa)) are Cytoplasmic-facing. Disordered stretches follow at residues 751–779 (AASR…AVMA) and 809–878 (QFRG…DSVV). A compositionally biased stretch (gly residues) spans 813 to 825 (GNQGDGHMMGGGS). The segment covering 839–852 (QTHDDESEDSRAGL) has biased composition (basic and acidic residues).

The protein belongs to the ATG9 family. In terms of assembly, homotrimer; forms a homotrimer with a central pore that forms a path between the two membrane leaflets. Post-translationally, phosphorylated by apg-1. Apg-1 phosphorylation is required for preautophagosome elongation.

The protein localises to the preautophagosomal structure membrane. The protein resides in the cytoplasmic vesicle membrane. It is found in the golgi apparatus membrane. It localises to the endoplasmic reticulum membrane. The catalysed reaction is a 1,2-diacyl-sn-glycero-3-phosphocholine(in) = a 1,2-diacyl-sn-glycero-3-phosphocholine(out). It catalyses the reaction a 1,2-diacyl-sn-glycero-3-phospho-L-serine(in) = a 1,2-diacyl-sn-glycero-3-phospho-L-serine(out). It carries out the reaction a 1,2-diacyl-sn-glycero-3-phosphoethanolamine(in) = a 1,2-diacyl-sn-glycero-3-phosphoethanolamine(out). The enzyme catalyses a 1,2-diacyl-sn-glycero-3-phospho-(1D-myo-inositol-3-phosphate)(in) = a 1,2-diacyl-sn-glycero-3-phospho-(1D-myo-inositol-3-phosphate)(out). In terms of biological role, phospholipid scramblase involved in autophagy and cytoplasm to vacuole transport (Cvt) vesicle formation. Cycles between the preautophagosomal structure/phagophore assembly site (PAS) and the cytoplasmic vesicle pool and supplies membrane for the growing autophagosome. Lipid scramblase activity plays a key role in preautophagosomal structure/phagophore assembly by distributing the phospholipids that arrive through atg-2 from the cytoplasmic to the luminal leaflet of the bilayer, thereby driving autophagosomal membrane expansion. Required for mitophagy. Also involved in endoplasmic reticulum-specific autophagic process and is essential for the survival of cells subjected to severe ER stress. Different machineries are required for anterograde trafficking to the PAS during either the Cvt pathway or bulk autophagy and for retrograde trafficking. This is Autophagy-related protein 9 (apg-7) from Neurospora crassa (strain ATCC 24698 / 74-OR23-1A / CBS 708.71 / DSM 1257 / FGSC 987).